Here is a 622-residue protein sequence, read N- to C-terminus: Lamin Dm0 (622 aa).

The tract at residues 1–50 (MSSKSRRAGTATPQPGNTSTPRPPSAGPQPPPPSTHSQTASSPLSPTRHS) is disordered. Ser2 is modified (N-acetylserine). Positions 2-56 (SSKSRRAGTATPQPGNTSTPRPPSAGPQPPPPSTHSQTASSPLSPTRHSRVAEKV) are head. Thr10, Thr12, and Thr20 each carry phosphothreonine. Over residues 21 to 34 (PRPPSAGPQPPPPS) the composition is skewed to pro residues. Residues Ser25 and Ser34 each carry the phosphoserine modification. At Thr39 the chain carries Phosphothreonine. Ser41, Ser42, and Ser45 each carry phosphoserine. Residue Thr47 is modified to Phosphothreonine. The 357-residue stretch at 54 to 410 (EKVELQNLND…KLLVGEEARL (357 aa)) folds into the IF rod domain. The segment at 55–91 (KVELQNLNDRLATYIDRVRNLETENSRLTIEVQTTRD) is coil 1A. The interval 92 to 103 (TVTRETTNIKNI) is linker 1. Positions 104–241 (FEAELLETRR…QIHSQEINES (138 aa)) are coil 1B. Ser235 bears the Phosphoserine mark. The interval 242–265 (RRIKQTEYSEIDGRLSSEYDAKLK) is linker 2. Tyr249 bears the Phosphotyrosine mark. A phosphoserine mark is found at Ser250 and Ser311. Positions 266-408 (QSLQELRAQY…YDKLLVGEEA (143 aa)) are coil 2. Residues 409–619 (RLNITPATNT…GDPQQSNEKC (211 aa)) form a tail region. 2 positions are modified to phosphothreonine: Thr413 and Thr435. The segment covering 429–440 (RNSTRATPSRRT) has biased composition (polar residues). The segment at 429 to 448 (RNSTRATPSRRTPSAAVKRK) is disordered. Phosphoserine is present on Ser442. The Nuclear localization signal signature appears at 446-451 (KRKRAV). A phosphoserine mark is found at Ser455 and Ser459. The LTD domain maps to 461–588 (ADYYVSASAK…RIVSQHTSSS (128 aa)). A Phosphoserine modification is found at Ser595. Phosphothreonine is present on Thr597. Residues 603 to 622 (EQLYHQQGDPQQSNEKCAIM) form a disordered region. The segment covering 605 to 622 (LYHQQGDPQQSNEKCAIM) has biased composition (polar residues). At Ser615 the chain carries Phosphoserine. Residue Cys619 is modified to Cysteine methyl ester. Cys619 is lipidated: S-farnesyl cysteine. A propeptide spans 620–622 (AIM) (removed in mature form).

The protein belongs to the intermediate filament family. Interacts directly with LBR. Interacts with MAN1. Interacts with Ote. Three forms of lamin have been identified in D.melanogaster, lamin Dm0 is rapidly processed to lamin Dm1 in the cytoplasm, Dm1 is then assembled in the nuclear envelope and is then phosphorylated, forming lamin Dm2. In terms of tissue distribution, constitutively expressed in all tissues (at protein level). Expressed in spermatocytes (at protein level).

The protein localises to the nucleus. Its subcellular location is the nucleus inner membrane. It is found in the nucleus envelope. It localises to the nucleus lamina. The protein resides in the cytoplasm. The protein localises to the cytoskeleton. Its subcellular location is the spindle pole. Functionally, lamins are components of the nuclear lamina, a fibrous layer on the nucleoplasmic side of the inner nuclear membrane, which is thought to provide a framework for the nuclear envelope and may also interact with chromatin. May have a role in the localization of the LEM domain proteins Ote, bocks and MAN1 to the nuclear membrane. In spermatocytes, plays a role in maintaining type-A lamin LamC nuclear localization; regulates meiotic cytokinesis by maintaining the structure of the spindle envelope, and by contributing to the formation of the contractile ring and central spindle. Required for nuclear migration and to link the microtubule organizing center (MTOC) to the nucleus. In addition, is required for nuclear envelope localization of klar. The polypeptide is Lamin Dm0 (Drosophila melanogaster (Fruit fly)).